The primary structure comprises 328 residues: Zinc chaperone YeiR (328 aa).

9–17 contributes to the GTP binding site; the sequence is GFLGSGKTT. A CXCC motif motif is present at residues 63–66; that stretch reads CMCC. GTP is bound at residue Asp-155. In terms of domain architecture, CobW C-terminal spans 241 to 321; sequence CGWIFDADTV…WNALQSALLK (81 aa).

It belongs to the SIMIBI class G3E GTPase family. ZNG1 subfamily. In terms of assembly, oligomerizes in the presence of Zn(2+).

The enzyme catalyses GTP + H2O = GDP + phosphate + H(+). Its activity is regulated as follows. GTPase activity is enhanced by Zn(2+) binding. In terms of biological role, zinc chaperone that directly transfers zinc cofactor to target proteins, thereby activating them. Zinc is transferred from the CXCC motif in the GTPase domain to the zinc binding site in target proteins in a process requiring GTP hydrolysis. The polypeptide is Zinc chaperone YeiR (yeiR) (Escherichia coli (strain K12)).